The primary structure comprises 331 residues: MAPAVLTAIPNRMSLRSLKWSLLLLSLLSFLVIWYLSLPHYNVIERVNWMYFYEYEPIYRQDFQFTLREHSNCSQQNPFLVILVTSRPSDVKARQAIRVTWGEKKTWWGHEVLTFFLLGQEAEREDKVLALSLEDEHALYGDIIRQDFLDTYNNLTLKTIMAFRWVIEFCPNAKYVMKTDTDVFINTGNLVKYLLNLNHSEKFFTGYPLIENYSYRGFFHKNHISYQEYPFKVFPPYCSGLGYIMSGDLVPKIYEMMGHVKPIKFEDVYVGICLNLLKVDIHIPEDTNLFFLFRIHLDVCQLRRVIAAHGFSSKEIITFWQVMLRNTTCHY.

Residues 1–20 (MAPAVLTAIPNRMSLRSLKW) lie on the Cytoplasmic side of the membrane. A helical; Signal-anchor for type II membrane protein membrane pass occupies residues 21 to 43 (SLLLLSLLSFLVIWYLSLPHYNV). Residues 44–331 (IERVNWMYFY…VMLRNTTCHY (288 aa)) are Lumenal-facing. Residues Asn-72, Asn-154, Asn-198, Asn-212, and Asn-326 are each glycosylated (N-linked (GlcNAc...) asparagine).

It belongs to the glycosyltransferase 31 family. Mg(2+) is required as a cofactor.

Its subcellular location is the golgi apparatus membrane. The catalysed reaction is a globoside Gb3Cer (d18:1(4E)) + UDP-N-acetyl-alpha-D-galactosamine = a globoside Gb4Cer (d18:1(4E)) + UDP + H(+). The protein operates within protein modification; protein glycosylation. Transfers N-acetylgalactosamine onto globotriaosylceramide. Plays a critical role in preimplantation stage embryonic development. The chain is UDP-GalNAc:beta-1,3-N-acetylgalactosaminyltransferase 1 (B3galnt1) from Rattus norvegicus (Rat).